The primary structure comprises 674 residues: Anosmin-1 (674 aa).

An N-terminal signal peptide occupies residues 1-21; that stretch reads MVRRAPGASLALLLWVTAVSC. 4 cysteine pairs are disulfide-bonded: Cys-47/Cys-71, Cys-80/Cys-99, Cys-84/Cys-95, and Cys-110/Cys-114. Asn-65 is a glycosylation site (N-linked (GlcNAc...) asparagine). The WAP domain maps to 121-170; the sequence is LSVKQGDCPAPEKASGFAAACFESCEADSECSGVKKCCSNGCGHTCQVPK. Fibronectin type-III domains are found at residues 180–281, 286–392, 418–515, and 545–652; these read PRKE…SKDP, APSN…TTQD, RRKP…FFVT, and KPEN…DLPP. N-linked (GlcNAc...) asparagine glycosylation is found at Asn-203 and Asn-294. Residues 388–402 show a composition bias toward polar residues; the sequence is STTQDNRNNNEQTSV. A disordered region spans residues 388 to 413; that stretch reads STTQDNRNNNEQTSVEKPPKGVVDPY. N-linked (GlcNAc...) asparagine glycans are attached at residues Asn-465, Asn-548, and Asn-559. A disordered region spans residues 655–674; it reads PHRPHLKHHPHRYKPPPEKY. Residues 656 to 668 are compositionally biased toward basic residues; that stretch reads HRPHLKHHPHRYK.

It is found in the cell surface. Functionally, may be an adhesion-like molecule with anti-protease activity. This Coturnix japonica (Japanese quail) protein is Anosmin-1.